A 528-amino-acid polypeptide reads, in one-letter code: MKLTVWTYEGPPHVGAMRVATGMTGLHYVLHAPQGDTYADLLFTMIERRDHRPPVSYTTFQARDLGSDTAHLFKDSCRDAYERFKPEAIIVGASCTAELIQDDPGGLAETMGLPIPVIALELPSYQRKENFGCDETFFQIVRALAKPVEKTARVSCNILGPTGLGFRHRDDVEELTGLLSEMGVDVNVVAPMRSSPSDIARLGAAHFNVMLYPETCEAACRHLERAFQQPYTKTVPIGVGATRDFIAEVQGLTGVTGAPDENRLRLPWWSASVDSTYLTGKRVFLFGDATHVKASARIARDEMGFEVVGLGCYNREFARDIRKLAKEFGLEALITDDYLEVEKAIEEAAPEMILGTQMERHIGKRLGIPCAVISAPVHVQDFPARYSPQVGFEGANVIFDTWIHPLVMGLEEHLLAMFREDFEFHDAAGPSHHGGHAPKPMHDAPAASAAAGAEASMAEETAAPSQDAPAATGGDVTVWLADAEKELKKIPFFVRGKAKRNTEKYALEQGVTEISVDTLYEAKAHYAR.

Aspartate 36 contributes to the [4Fe-4S] cluster binding site. Catalysis depends on aspartate 274, which acts as the Proton donor. A substrate-binding site is contributed by 409 to 410; it reads GL. A disordered region spans residues 429 to 471; the sequence is GPSHHGGHAPKPMHDAPAASAAAGAEASMAEETAAPSQDAPAA. Over residues 444–465 the composition is skewed to low complexity; sequence APAASAAAGAEASMAEETAAPS.

Belongs to the ChlB/BchB/BchZ family. Protochlorophyllide reductase is composed of three subunits; BchL, BchN and BchB. Forms a heterotetramer of two BchB and two BchN subunits. [4Fe-4S] cluster serves as cofactor.

It catalyses the reaction chlorophyllide a + oxidized 2[4Fe-4S]-[ferredoxin] + 2 ADP + 2 phosphate = protochlorophyllide a + reduced 2[4Fe-4S]-[ferredoxin] + 2 ATP + 2 H2O. The protein operates within porphyrin-containing compound metabolism; bacteriochlorophyll biosynthesis (light-independent). Its function is as follows. Component of the dark-operative protochlorophyllide reductase (DPOR) that uses Mg-ATP and reduced ferredoxin to reduce ring D of protochlorophyllide (Pchlide) to form chlorophyllide a (Chlide). This reaction is light-independent. The NB-protein (BchN-BchB) is the catalytic component of the complex. The sequence is that of Light-independent protochlorophyllide reductase subunit B from Dinoroseobacter shibae (strain DSM 16493 / NCIMB 14021 / DFL 12).